The following is a 252-amino-acid chain: 2-succinyl-6-hydroxy-2,4-cyclohexadiene-1-carboxylate synthase (252 aa).

The protein belongs to the AB hydrolase superfamily. MenH family. As to quaternary structure, monomer.

The enzyme catalyses 5-enolpyruvoyl-6-hydroxy-2-succinyl-cyclohex-3-ene-1-carboxylate = (1R,6R)-6-hydroxy-2-succinyl-cyclohexa-2,4-diene-1-carboxylate + pyruvate. The protein operates within quinol/quinone metabolism; 1,4-dihydroxy-2-naphthoate biosynthesis; 1,4-dihydroxy-2-naphthoate from chorismate: step 3/7. It participates in quinol/quinone metabolism; menaquinone biosynthesis. In terms of biological role, catalyzes a proton abstraction reaction that results in 2,5-elimination of pyruvate from 2-succinyl-5-enolpyruvyl-6-hydroxy-3-cyclohexene-1-carboxylate (SEPHCHC) and the formation of 2-succinyl-6-hydroxy-2,4-cyclohexadiene-1-carboxylate (SHCHC). The polypeptide is 2-succinyl-6-hydroxy-2,4-cyclohexadiene-1-carboxylate synthase (Salmonella typhimurium (strain LT2 / SGSC1412 / ATCC 700720)).